The primary structure comprises 264 residues: uncharacterized protein (264 aa).

A divalent metal cation contacts are provided by His5, His7, Glu93, His134, His158, and Asp208.

This sequence belongs to the metallo-dependent hydrolases superfamily. TatD-type hydrolase family. The cofactor is a divalent metal cation.

This is an uncharacterized protein from Mycobacterium tuberculosis (strain ATCC 25618 / H37Rv).